A 417-amino-acid chain; its full sequence is 4-hydroxy-3-methylbut-2-en-1-yl diphosphate synthase (flavodoxin) (417 aa).

[4Fe-4S] cluster-binding residues include cysteine 305, cysteine 308, cysteine 351, and glutamate 358.

It belongs to the IspG family. It depends on [4Fe-4S] cluster as a cofactor.

The catalysed reaction is (2E)-4-hydroxy-3-methylbut-2-enyl diphosphate + oxidized [flavodoxin] + H2O + 2 H(+) = 2-C-methyl-D-erythritol 2,4-cyclic diphosphate + reduced [flavodoxin]. It functions in the pathway isoprenoid biosynthesis; isopentenyl diphosphate biosynthesis via DXP pathway; isopentenyl diphosphate from 1-deoxy-D-xylulose 5-phosphate: step 5/6. Its function is as follows. Converts 2C-methyl-D-erythritol 2,4-cyclodiphosphate (ME-2,4cPP) into 1-hydroxy-2-methyl-2-(E)-butenyl 4-diphosphate. The chain is 4-hydroxy-3-methylbut-2-en-1-yl diphosphate synthase (flavodoxin) from Nitrosomonas europaea (strain ATCC 19718 / CIP 103999 / KCTC 2705 / NBRC 14298).